A 484-amino-acid polypeptide reads, in one-letter code: MHHYPIFLKLHGCRCLVVGGGEAAARRAGDLLRAGARVELIAPVLAAPCEQLLDTSPGELHHRAEPFAAGMEEGAALVVGASGDEATDRTVYEACRARGIPVNVAGRPSLSTYITPVQVDRSPLQLAVSSGGAAPVLARQIASRLETLLPAAYGRLARLAGRMREQVRVALPDKDWRLRFWEQIFDGAAAESVLAGREAEGEAELLRLLEQEQARPAPQGEVFLVGAGPGDPDLLTFRALRLMQRADVVLYDRLAAPALLDLVRKEAERIPVGKRRGRHTLPQERINERLVELARAGKRVLRLKGGDPFLFGRGGEEIEGLIEQDIPFQVVPGISAAQGAASYAGIPLTHRDYAQTCRLLTGHRRAGHPQMKAHAPYRQDETLIIYMGLVNLEAVCEQLCECGLPPEHPAAVVAQATTPQQRVVLGNLRTLAERVRAERVESPALVVVGPTVQLHPRLGWYRGEAEDRDAAASIDPCWTGGMRD.

A precorrin-2 dehydrogenase /sirohydrochlorin ferrochelatase region spans residues 1–205 (MHHYPIFLKL…GREAEGEAEL (205 aa)). NAD(+) is bound by residues 22 to 23 (EA) and 43 to 44 (PV). S130 bears the Phosphoserine mark. A uroporphyrinogen-III C-methyltransferase region spans residues 220-484 (GEVFLVGAGP…DPCWTGGMRD (265 aa)). P229 provides a ligand contact to S-adenosyl-L-methionine. Catalysis depends on D252, which acts as the Proton acceptor. K274 (proton donor) is an active-site residue. S-adenosyl-L-methionine is bound by residues 305-307 (GGD), L310, 335-336 (SA), M387, and A416.

This sequence in the N-terminal section; belongs to the precorrin-2 dehydrogenase / sirohydrochlorin ferrochelatase family. The protein in the C-terminal section; belongs to the precorrin methyltransferase family.

The catalysed reaction is uroporphyrinogen III + 2 S-adenosyl-L-methionine = precorrin-2 + 2 S-adenosyl-L-homocysteine + H(+). The enzyme catalyses precorrin-2 + NAD(+) = sirohydrochlorin + NADH + 2 H(+). It carries out the reaction siroheme + 2 H(+) = sirohydrochlorin + Fe(2+). Its pathway is cofactor biosynthesis; adenosylcobalamin biosynthesis; precorrin-2 from uroporphyrinogen III: step 1/1. It participates in cofactor biosynthesis; adenosylcobalamin biosynthesis; sirohydrochlorin from precorrin-2: step 1/1. The protein operates within porphyrin-containing compound metabolism; siroheme biosynthesis; precorrin-2 from uroporphyrinogen III: step 1/1. It functions in the pathway porphyrin-containing compound metabolism; siroheme biosynthesis; siroheme from sirohydrochlorin: step 1/1. Its pathway is porphyrin-containing compound metabolism; siroheme biosynthesis; sirohydrochlorin from precorrin-2: step 1/1. Multifunctional enzyme that catalyzes the SAM-dependent methylations of uroporphyrinogen III at position C-2 and C-7 to form precorrin-2 via precorrin-1. Then it catalyzes the NAD-dependent ring dehydrogenation of precorrin-2 to yield sirohydrochlorin. Finally, it catalyzes the ferrochelation of sirohydrochlorin to yield siroheme. The protein is Siroheme synthase 1 of Halorhodospira halophila (strain DSM 244 / SL1) (Ectothiorhodospira halophila (strain DSM 244 / SL1)).